Consider the following 292-residue polypeptide: Protease HtpX homolog (292 aa).

Transmembrane regions (helical) follow at residues 7-27 (TFILMAALTALVMGMGGLIGG) and 29-49 (GGAVIALAIAGAGNLFAWWNS). Residue His-131 coordinates Zn(2+). The active site involves Glu-132. Zn(2+) is bound at residue His-135. Helical transmembrane passes span 148–168 (ATMAGAIAMLGNMLMFSSMFG) and 178–198 (LAAILAMIFAPMAAGLVQMAI). Glu-203 is a Zn(2+) binding site.

Belongs to the peptidase M48B family. Zn(2+) serves as cofactor.

Its subcellular location is the cell inner membrane. In Paracoccus denitrificans (strain Pd 1222), this protein is Protease HtpX homolog.